The chain runs to 215 residues: Probable phosphoglycerate mutase GpmB (215 aa).

Substrate contacts are provided by residues 8–15 (RHGETLWN), 21–22 (QG), R58, R60, 82–85 (ELNM), and 151–152 (GM). The Tele-phosphohistidine intermediate role is filled by H9. E82 functions as the Proton donor/acceptor in the catalytic mechanism.

Belongs to the phosphoglycerate mutase family. GpmB subfamily.

It carries out the reaction (2R)-2-phosphoglycerate = (2R)-3-phosphoglycerate. Its pathway is carbohydrate degradation; glycolysis; pyruvate from D-glyceraldehyde 3-phosphate: step 3/5. In Erwinia tasmaniensis (strain DSM 17950 / CFBP 7177 / CIP 109463 / NCPPB 4357 / Et1/99), this protein is Probable phosphoglycerate mutase GpmB.